The following is a 1040-amino-acid chain: Putative protein tag-76 (1040 aa).

Residues 1-15 show a composition bias toward polar residues; sequence MSRRNATSFVDNNTL. Disordered stretches follow at residues 1-61 and 322-367; these read MSRR…GSVS and RTSK…PGAN. Positions 16–32 are enriched in low complexity; that stretch reads TSSGISGSGSMSPPITS. Over residues 33–50 the composition is skewed to polar residues; it reads RPASGQASPLTSNGSLSP. The segment covering 333–356 has biased composition (gly residues); the sequence is GPGGPGGPGGYRGGRGGGRGGSYG. Positions 379–486 constitute a PAZ domain; it reads FTMDTLSRDT…LPMEHCLIDS (108 aa). The 307-residue stretch at 660 to 966 folds into the Piwi domain; the sequence is CIIVVLQSKN…VATRARCHVK (307 aa).

This Caenorhabditis elegans protein is Putative protein tag-76 (tag-76).